Reading from the N-terminus, the 209-residue chain is UPF0319 protein VFMJ11_1730 (209 aa).

Residues 1–21 (MKIQSIFAASFCLLSSISAHA) form the signal peptide.

It belongs to the UPF0319 family.

The sequence is that of UPF0319 protein VFMJ11_1730 from Aliivibrio fischeri (strain MJ11) (Vibrio fischeri).